The primary structure comprises 283 residues: 2-hydroxy-6-oxononadienedioate/2-hydroxy-6-oxononatrienedioate hydrolase (283 aa).

Residues 35–269 (VVVMFHGSGP…KCGHWAQWEH (235 aa)) form the AB hydrolase-1 domain. The active-site Proton acceptor is His-263.

This sequence belongs to the AB hydrolase superfamily. MhpC family. As to quaternary structure, homodimer.

It catalyses the reaction (2Z,4E)-2-hydroxy-6-oxonona-2,4-dienedioate + H2O = (2Z)-2-hydroxypenta-2,4-dienoate + succinate + H(+). The catalysed reaction is (2Z,4E,7E)-2-hydroxy-6-oxonona-2,4,7-trienedioate + H2O = (2Z)-2-hydroxypenta-2,4-dienoate + fumarate + H(+). It participates in aromatic compound metabolism; 3-phenylpropanoate degradation. Its function is as follows. Catalyzes the cleavage of the C5-C6 bond of 2-hydroxy-6-oxononadienedioate and 2-hydroxy-6-oxononatrienedioate, a dienol ring fission product of the bacterial meta-cleavage pathway for degradation of phenylpropionic acid. In Pseudomonas sp, this protein is 2-hydroxy-6-oxononadienedioate/2-hydroxy-6-oxononatrienedioate hydrolase.